A 421-amino-acid chain; its full sequence is Histidine--tRNA ligase (421 aa).

Belongs to the class-II aminoacyl-tRNA synthetase family. In terms of assembly, homodimer.

The protein resides in the cytoplasm. The catalysed reaction is tRNA(His) + L-histidine + ATP = L-histidyl-tRNA(His) + AMP + diphosphate + H(+). The chain is Histidine--tRNA ligase from Coxiella burnetii (strain CbuG_Q212) (Coxiella burnetii (strain Q212)).